The chain runs to 729 residues: Polyribonucleotide nucleotidyltransferase (729 aa).

The disordered stretch occupies residues 399-419; sequence YMHNYNFPPYSTGETGRVGSP. Aspartate 509 and aspartate 515 together coordinate Mg(2+). The 60-residue stretch at 575–634 folds into the KH domain; it reads PRVISVKIPVDKIGEVIGPKGKMINQIQADSGAEITVEDDGTIYIGAADGPAAETARSAI. One can recognise an S1 motif domain in the interval 646 to 718; sequence GERYLGTIVK…ARGKISLAPG (73 aa).

The protein belongs to the polyribonucleotide nucleotidyltransferase family. Mg(2+) serves as cofactor.

It localises to the cytoplasm. The catalysed reaction is RNA(n+1) + phosphate = RNA(n) + a ribonucleoside 5'-diphosphate. Its function is as follows. Involved in mRNA degradation. Catalyzes the phosphorolysis of single-stranded polyribonucleotides processively in the 3'- to 5'-direction. The polypeptide is Polyribonucleotide nucleotidyltransferase (Parafrankia sp. (strain EAN1pec)).